The chain runs to 215 residues: Large ribosomal subunit protein uL16 (215 aa).

Positions M1 to Y22 are disordered.

It belongs to the universal ribosomal protein uL16 family.

In Tetrahymena thermophila (strain SB210), this protein is Large ribosomal subunit protein uL16 (RPL10).